Here is a 175-residue protein sequence, read N- to C-terminus: Bcl-2-related protein A1 (175 aa).

Belongs to the Bcl-2 family. Interacts directly with BCL2L11/BIM, BAK1, BID, BMF and BBC3. Interacts directly with PMAIP1. Interacts with BOP. Interacts with ING4. Interacts with UBQLN4.

It localises to the cytoplasm. Its function is as follows. Retards apoptosis induced by IL-3 deprivation. May function in the response of hemopoietic cells to external signals and in maintaining endothelial survival during infection. Can inhibit apoptosis induced by serum starvation in the mammary epithelial cell line HC11. This Bos taurus (Bovine) protein is Bcl-2-related protein A1 (BCL2A1).